A 269-amino-acid polypeptide reads, in one-letter code: Formamidopyrimidine-DNA glycosylase (269 aa).

Residue Pro2 is the Schiff-base intermediate with DNA of the active site. Glu3 serves as the catalytic Proton donor. Lys57 acts as the Proton donor; for beta-elimination activity in catalysis. DNA-binding residues include His90, Arg109, and Lys150. The segment at 235–269 adopts an FPG-type zinc-finger fold; the sequence is QVYGREGEPCRVCGTPILAGKHAQRRTYWCRRCQK. Arg259 functions as the Proton donor; for delta-elimination activity in the catalytic mechanism.

Belongs to the FPG family. In terms of assembly, monomer. Requires Zn(2+) as cofactor.

It catalyses the reaction Hydrolysis of DNA containing ring-opened 7-methylguanine residues, releasing 2,6-diamino-4-hydroxy-5-(N-methyl)formamidopyrimidine.. The enzyme catalyses 2'-deoxyribonucleotide-(2'-deoxyribose 5'-phosphate)-2'-deoxyribonucleotide-DNA = a 3'-end 2'-deoxyribonucleotide-(2,3-dehydro-2,3-deoxyribose 5'-phosphate)-DNA + a 5'-end 5'-phospho-2'-deoxyribonucleoside-DNA + H(+). Involved in base excision repair of DNA damaged by oxidation or by mutagenic agents. Acts as a DNA glycosylase that recognizes and removes damaged bases. Has a preference for oxidized purines, such as 7,8-dihydro-8-oxoguanine (8-oxoG). Has AP (apurinic/apyrimidinic) lyase activity and introduces nicks in the DNA strand. Cleaves the DNA backbone by beta-delta elimination to generate a single-strand break at the site of the removed base with both 3'- and 5'-phosphates. The chain is Formamidopyrimidine-DNA glycosylase from Cronobacter sakazakii (strain ATCC BAA-894) (Enterobacter sakazakii).